The following is an 82-amino-acid chain: Small ribosomal subunit protein uS17 (82 aa).

Belongs to the universal ribosomal protein uS17 family. Part of the 30S ribosomal subunit.

In terms of biological role, one of the primary rRNA binding proteins, it binds specifically to the 5'-end of 16S ribosomal RNA. The chain is Small ribosomal subunit protein uS17 from Shewanella sp. (strain MR-7).